A 170-amino-acid polypeptide reads, in one-letter code: Adenine phosphoribosyltransferase (170 aa).

Belongs to the purine/pyrimidine phosphoribosyltransferase family. In terms of assembly, homodimer.

It localises to the cytoplasm. It carries out the reaction AMP + diphosphate = 5-phospho-alpha-D-ribose 1-diphosphate + adenine. Its pathway is purine metabolism; AMP biosynthesis via salvage pathway; AMP from adenine: step 1/1. Its function is as follows. Catalyzes a salvage reaction resulting in the formation of AMP, that is energically less costly than de novo synthesis. The sequence is that of Adenine phosphoribosyltransferase from Thermotoga petrophila (strain ATCC BAA-488 / DSM 13995 / JCM 10881 / RKU-1).